The sequence spans 418 residues: Serine hydroxymethyltransferase (418 aa).

(6S)-5,6,7,8-tetrahydrofolate is bound by residues Leu121 and 125 to 127 (GHL). Position 230 is an N6-(pyridoxal phosphate)lysine (Lys230). 355-357 (SPF) is a binding site for (6S)-5,6,7,8-tetrahydrofolate.

The protein belongs to the SHMT family. Homodimer. It depends on pyridoxal 5'-phosphate as a cofactor.

It localises to the cytoplasm. It carries out the reaction (6R)-5,10-methylene-5,6,7,8-tetrahydrofolate + glycine + H2O = (6S)-5,6,7,8-tetrahydrofolate + L-serine. The protein operates within one-carbon metabolism; tetrahydrofolate interconversion. Its pathway is amino-acid biosynthesis; glycine biosynthesis; glycine from L-serine: step 1/1. In terms of biological role, catalyzes the reversible interconversion of serine and glycine with tetrahydrofolate (THF) serving as the one-carbon carrier. This reaction serves as the major source of one-carbon groups required for the biosynthesis of purines, thymidylate, methionine, and other important biomolecules. Also exhibits THF-independent aldolase activity toward beta-hydroxyamino acids, producing glycine and aldehydes, via a retro-aldol mechanism. This is Serine hydroxymethyltransferase from Methylococcus capsulatus (strain ATCC 33009 / NCIMB 11132 / Bath).